A 355-amino-acid chain; its full sequence is Serpentine receptor class epsilon-1 (355 aa).

7 helical membrane-spanning segments follow: residues 28–48 (FELLAMIIEIPSFLLVIYATI), 56–76 (LNFIGLFMLLGYYVFLVGRFI), 102–122 (ILSSILQFFYMGCACGISLAV), 144–164 (ISLFLCSEFTVACGVSAIVML), 172–192 (VMAFLGVFISCASFLFYLVLF), 232–252 (VVLFSGVNNFVMAIILTMYMS), and 268–288 (FAFNCCVLLYSFLMLIIIIFS).

Belongs to the nematode receptor-like protein sre family.

It is found in the membrane. The protein is Serpentine receptor class epsilon-1 (sre-1) of Caenorhabditis elegans.